The following is a 246-amino-acid chain: Vacuolar iron transporter 2 (246 aa).

Over 1 to 32 the chain is Cytoplasmic; the sequence is MVKEFVQDEEKQRLLLDEHTEKHFTAGEVVRD. Residues 33–53 form a helical membrane-spanning segment; the sequence is IIIGVSDGLTVPFALAAGLSG. At 54-58 the chain is on the vacuolar side; it reads ANAPS. A helical transmembrane segment spans residues 59–79; sequence ALVLTAGLAEVAAGAISMGLG. Residues 80–164 are Cytoplasmic-facing; that stretch reads GYLAAKSDAD…PEPRRALMSA (85 aa). The tract at residues 86–161 is cytoplasmic metal binding domain (MBD); it reads SDADHYHREL…LEKPEPRRAL (76 aa). Glu98, Glu101, Glu109, Glu112, Met145, and Glu149 together coordinate Fe cation. The helical transmembrane segment at 165–185 threads the bilayer; the sequence is GTIALAYVVGGLVPLLPYMFV. Residues 186–190 are Vacuolar-facing; that stretch reads PTADR. A helical membrane pass occupies residues 191–211; the sequence is AMATSVVVTLAALLFFGYVKG. The Cytoplasmic portion of the chain corresponds to 212-218; that stretch reads RFTGNRP. The chain crosses the membrane as a helical span at residues 219-239; the sequence is FISAFQTAVIGALASAAAFGM. Over 240 to 246 the chain is Vacuolar; sequence AKAVQSI.

Belongs to the CCC1 family. Homodimer. The dimeric interaction is mediated by both the transmembrane domains (TMDs) and the cytoplasmic metal binding domain (MBD). Expressed in leaf sheaths and at lower level in leaf blades.

It is found in the vacuole membrane. The enzyme catalyses Fe(2+)(in) = Fe(2+)(out). Functionally, vacuolar iron transporter involved in the transfer of iron ions from the cytosol to the vacuole for intracellular iron storage. Vacuolar iron storage is required for seed embryo and seedling development. May be involved in the regulation of iron translocation between flag leaves and seeds. Can transport zinc ions from the cytosol to the vacuole. The protein is Vacuolar iron transporter 2 of Oryza sativa subsp. japonica (Rice).